The chain runs to 197 residues: Putative carbonic anhydrase YvdA (197 aa).

Positions 41, 43, 99, and 102 each coordinate Zn(2+).

The protein belongs to the beta-class carbonic anhydrase family. Zn(2+) is required as a cofactor.

It catalyses the reaction hydrogencarbonate + H(+) = CO2 + H2O. Functionally, reversible hydration of carbon dioxide. This chain is Putative carbonic anhydrase YvdA (yvdA), found in Bacillus subtilis (strain 168).